The primary structure comprises 213 residues: Imidazole glycerol phosphate synthase subunit HisH (213 aa).

A Glutamine amidotransferase type-1 domain is found at 4–211 (NLGVIDYGMG…LHWLHQGAEP (208 aa)). The active-site Nucleophile is Cys-82. Catalysis depends on residues His-186 and Glu-188.

In terms of assembly, heterodimer of HisH and HisF.

The protein localises to the cytoplasm. The enzyme catalyses 5-[(5-phospho-1-deoxy-D-ribulos-1-ylimino)methylamino]-1-(5-phospho-beta-D-ribosyl)imidazole-4-carboxamide + L-glutamine = D-erythro-1-(imidazol-4-yl)glycerol 3-phosphate + 5-amino-1-(5-phospho-beta-D-ribosyl)imidazole-4-carboxamide + L-glutamate + H(+). It catalyses the reaction L-glutamine + H2O = L-glutamate + NH4(+). It functions in the pathway amino-acid biosynthesis; L-histidine biosynthesis; L-histidine from 5-phospho-alpha-D-ribose 1-diphosphate: step 5/9. In terms of biological role, IGPS catalyzes the conversion of PRFAR and glutamine to IGP, AICAR and glutamate. The HisH subunit catalyzes the hydrolysis of glutamine to glutamate and ammonia as part of the synthesis of IGP and AICAR. The resulting ammonia molecule is channeled to the active site of HisF. The polypeptide is Imidazole glycerol phosphate synthase subunit HisH (Synechococcus sp. (strain CC9902)).